We begin with the raw amino-acid sequence, 154 residues long: Large ribosomal subunit protein uL13 (154 aa).

The protein belongs to the universal ribosomal protein uL13 family. As to quaternary structure, part of the 50S ribosomal subunit.

Its function is as follows. This protein is one of the early assembly proteins of the 50S ribosomal subunit, although it is not seen to bind rRNA by itself. It is important during the early stages of 50S assembly. The polypeptide is Large ribosomal subunit protein uL13 (Bartonella tribocorum (strain CIP 105476 / IBS 506)).